The following is a 309-amino-acid chain: Serine/threonine-protein phosphatase 4 catalytic subunit (309 aa).

Residues D52, H54, D80, and N112 each contribute to the Mn(2+) site. H113 serves as the catalytic Proton donor. Residues H162 and H236 each coordinate Mn(2+). L309 carries the post-translational modification Leucine methyl ester.

This sequence belongs to the PPP phosphatase family. PP-4 (PP-X) subfamily. As to quaternary structure, catalytic subunit of the histone H2A phosphatase complex (HTP-C) containing PPH3, PSY2 and PSY4. Mn(2+) is required as a cofactor.

The protein resides in the cytoplasm. It is found in the nucleus. It catalyses the reaction O-phospho-L-seryl-[protein] + H2O = L-seryl-[protein] + phosphate. The enzyme catalyses O-phospho-L-threonyl-[protein] + H2O = L-threonyl-[protein] + phosphate. Its function is as follows. Forms the histone H2A phosphatase complex in association with the regulatory subunits PSY2 and PSY4, which dephosphorylates H2AS128ph (gamma-H2A) that has been displaced from sites of DNA lesions in the double-stranded DNA break repair process. Dephosphorylation is necessary for efficient recovery from the DNA damage checkpoint. In Candida glabrata (strain ATCC 2001 / BCRC 20586 / JCM 3761 / NBRC 0622 / NRRL Y-65 / CBS 138) (Yeast), this protein is Serine/threonine-protein phosphatase 4 catalytic subunit (PPH3).